The primary structure comprises 104 residues: ESAT-6-like protein (104 aa).

Residues 12-43 adopt a coiled-coil conformation; sequence MAQAAQDIEQSANAIRGMQNQLASAKDQLRSH.

It belongs to the WXG100 family. CFP-10 subfamily. In isolation forms a homodimer. Forms a tight 1:1 complex with EsxA. Forms a complex with EsxA and EccC, probably wholly mediated by EsxB; binds in a pocket in the third FtsK (ATPase) domain of EccC (residues 1163-1208).

The protein localises to the secreted. In terms of biological role, may help regulate assembly and function of the type VII secretion system (T7SS). Binds to EccC and induces its multimerization. May serve as a chaperone for EsxA. This Thermomonospora curvata (strain ATCC 19995 / DSM 43183 / JCM 3096 / KCTC 9072 / NBRC 15933 / NCIMB 10081 / Henssen B9) protein is ESAT-6-like protein.